A 123-amino-acid chain; its full sequence is Fluoride-specific ion channel FluC (123 aa).

4 helical membrane-spanning segments follow: residues 6-26 (VALV…LSGV), 38-58 (LLVN…IFWG), 68-88 (FLGT…YETF), and 100-120 (LLNI…GFVL). Positions 75 and 78 each coordinate Na(+).

Belongs to the fluoride channel Fluc/FEX (TC 1.A.43) family.

The protein localises to the cell membrane. The enzyme catalyses fluoride(in) = fluoride(out). With respect to regulation, na(+) is not transported, but it plays an essential structural role and its presence is essential for fluoride channel function. Its function is as follows. Fluoride-specific ion channel. Important for reducing fluoride concentration in the cell, thus reducing its toxicity. The sequence is that of Fluoride-specific ion channel FluC from Pyrococcus furiosus (strain ATCC 43587 / DSM 3638 / JCM 8422 / Vc1).